Here is a 310-residue protein sequence, read N- to C-terminus: ADP-L-glycero-D-manno-heptose-6-epimerase (310 aa).

NADP(+) contacts are provided by residues 10–11, 31–32, K38, K53, 75–79, and N92; these read FI, DN, and EGACS. The Proton acceptor role is filled by Y140. K144 contributes to the NADP(+) binding site. Residue N169 participates in substrate binding. NADP(+)-binding residues include V170 and K178. K178 acts as the Proton acceptor in catalysis. Substrate contacts are provided by residues S180, H187, 201–204, and R209; that span reads FEGS. An N6-acetyllysine modification is found at K267. Y272 lines the substrate pocket.

Belongs to the NAD(P)-dependent epimerase/dehydratase family. HldD subfamily. Homopentamer. NADP(+) is required as a cofactor.

It carries out the reaction ADP-D-glycero-beta-D-manno-heptose = ADP-L-glycero-beta-D-manno-heptose. The protein operates within nucleotide-sugar biosynthesis; ADP-L-glycero-beta-D-manno-heptose biosynthesis; ADP-L-glycero-beta-D-manno-heptose from D-glycero-beta-D-manno-heptose 7-phosphate: step 4/4. Catalyzes the interconversion between ADP-D-glycero-beta-D-manno-heptose and ADP-L-glycero-beta-D-manno-heptose via an epimerization at carbon 6 of the heptose. The polypeptide is ADP-L-glycero-D-manno-heptose-6-epimerase (Escherichia coli (strain SMS-3-5 / SECEC)).